The chain runs to 463 residues: uncharacterized protein (463 aa).

The next 12 membrane-spanning stretches (helical) occupy residues 21-40 (DFACNLIYATVSTYLLFFYT), 50-72 (AGTMFLVVRIIDALADPFIGTIV), 84-104 (PYLLFGAFPFVILAILCFTTP), 112-132 (LIYAYITYVGLSLTYTTINVP), 156-176 (LFANLGGLVVAFFVPLLAAYL), 186-206 (GWQLTMGILGMIGGCLLIFCF), 237-257 (LVVLSIFFIIIFGVNSISNSV), 271-291 (LVKWYGLIGSLPALVILPFIP), 311-331 (IIGLLALLFVPPSNVYLILVC), 334-354 (IAAAGSLTAGGYMWALIPETI), 367-387 (GLIYAIIGFFFKFGMALGGVV), and 408-428 (LMGILITTTIIPVFLLVLALI).

It belongs to the sodium:galactoside symporter (TC 2.A.2) family.

The protein resides in the cell membrane. This is an uncharacterized protein from Bacillus subtilis (strain 168).